Here is a 344-residue protein sequence, read N- to C-terminus: Chalcone synthase A (344 aa).

Cysteine 167 is a catalytic residue.

Belongs to the thiolase-like superfamily. Chalcone/stilbene synthases family.

The enzyme catalyses (E)-4-coumaroyl-CoA + 3 malonyl-CoA + 3 H(+) = 2',4,4',6'-tetrahydroxychalcone + 3 CO2 + 4 CoA. Its pathway is secondary metabolite biosynthesis; flavonoid biosynthesis. In terms of biological role, the primary product of this enzyme is 4,2',4',6'-tetrahydroxychalcone (also termed naringenin-chalcone or chalcone) which can under specific conditions spontaneously isomerize into naringenin. The sequence is that of Chalcone synthase A (CHSA) from Ipomoea nil (Japanese morning glory).